A 282-amino-acid chain; its full sequence is 4-diphosphocytidyl-2-C-methyl-D-erythritol kinase (282 aa).

Residue Lys13 is part of the active site. ATP is bound at residue 96–106; that stretch reads PMGGGIGGGSS. Asp138 is an active-site residue.

The protein belongs to the GHMP kinase family. IspE subfamily.

The enzyme catalyses 4-CDP-2-C-methyl-D-erythritol + ATP = 4-CDP-2-C-methyl-D-erythritol 2-phosphate + ADP + H(+). It functions in the pathway isoprenoid biosynthesis; isopentenyl diphosphate biosynthesis via DXP pathway; isopentenyl diphosphate from 1-deoxy-D-xylulose 5-phosphate: step 3/6. Its function is as follows. Catalyzes the phosphorylation of the position 2 hydroxy group of 4-diphosphocytidyl-2C-methyl-D-erythritol. This Pseudomonas syringae pv. syringae (strain B728a) protein is 4-diphosphocytidyl-2-C-methyl-D-erythritol kinase.